Reading from the N-terminus, the 980-residue chain is Peroxisomal ATPase PEX6 (980 aa).

Arg-119 bears the Omega-N-methylarginine mark. Residues 470-477 (GPPGCGKT) and 744-751 (GPPGTGKT) each bind ATP.

The protein belongs to the AAA ATPase family. Interacts with PEX1; forming the PEX1-PEX6 AAA ATPase complex, which is composed of a heterohexamer formed by a trimer of PEX1-PEX6 dimers. Interacts with PEX26; interaction is direct and promotes recruitment to peroxisomal membranes. Interacts with ZFAND6. As to expression, expressed in the retina, at higher levels in the photoreceptor layer at the joint between the outer and inner segments.

The protein localises to the cytoplasm. The protein resides in the cytosol. It localises to the peroxisome membrane. Its subcellular location is the cell projection. It is found in the cilium. The protein localises to the photoreceptor outer segment. It catalyses the reaction ATP + H2O = ADP + phosphate + H(+). Functionally, component of the PEX1-PEX6 AAA ATPase complex, a protein dislocase complex that mediates the ATP-dependent extraction of the PEX5 receptor from peroxisomal membranes, an essential step for PEX5 recycling. Specifically recognizes PEX5 monoubiquitinated at 'Cys-11', and pulls it out of the peroxisome lumen through the PEX2-PEX10-PEX12 retrotranslocation channel. Extraction by the PEX1-PEX6 AAA ATPase complex is accompanied by unfolding of the TPR repeats and release of bound cargo from PEX5. The protein is Peroxisomal ATPase PEX6 of Homo sapiens (Human).